Here is a 143-residue protein sequence, read N- to C-terminus: uncharacterized protein (143 aa).

It localises to the cytoplasm. The protein localises to the nucleus. This is an uncharacterized protein from Schizosaccharomyces pombe (strain 972 / ATCC 24843) (Fission yeast).